Reading from the N-terminus, the 329-residue chain is Probable tyrosine--tRNA ligase, cytoplasmic (329 aa).

Y35 is a binding site for L-tyrosine. The 'HIGH' region motif lies at 40 to 48; that stretch reads TTGKPHIAY. Residues Y162, Q166, D169, and Q184 each contribute to the L-tyrosine site. The 'KMSKS' region motif lies at 218–222; that stretch reads KMSSS.

It belongs to the class-I aminoacyl-tRNA synthetase family. In terms of assembly, homodimer.

It localises to the cytoplasm. It catalyses the reaction tRNA(Tyr) + L-tyrosine + ATP = L-tyrosyl-tRNA(Tyr) + AMP + diphosphate + H(+). The protein is Probable tyrosine--tRNA ligase, cytoplasmic of Vairimorpha ceranae (strain BRL01) (Microsporidian parasite).